A 260-amino-acid chain; its full sequence is 1-(5-phosphoribosyl)-5-[(5-phosphoribosylamino)methylideneamino] imidazole-4-carboxamide isomerase (260 aa).

Aspartate 8 acts as the Proton acceptor in catalysis. Aspartate 130 (proton donor) is an active-site residue.

Belongs to the HisA/HisF family.

Its subcellular location is the cytoplasm. It carries out the reaction 1-(5-phospho-beta-D-ribosyl)-5-[(5-phospho-beta-D-ribosylamino)methylideneamino]imidazole-4-carboxamide = 5-[(5-phospho-1-deoxy-D-ribulos-1-ylimino)methylamino]-1-(5-phospho-beta-D-ribosyl)imidazole-4-carboxamide. It functions in the pathway amino-acid biosynthesis; L-histidine biosynthesis; L-histidine from 5-phospho-alpha-D-ribose 1-diphosphate: step 4/9. This chain is 1-(5-phosphoribosyl)-5-[(5-phosphoribosylamino)methylideneamino] imidazole-4-carboxamide isomerase, found in Chlorobaculum parvum (strain DSM 263 / NCIMB 8327) (Chlorobium vibrioforme subsp. thiosulfatophilum).